Reading from the N-terminus, the 339-residue chain is Adenosine deaminase (339 aa).

Zn(2+) contacts are provided by His15 and His17. Substrate is bound by residues His17, Asp19, and Gly172. His199 is a binding site for Zn(2+). Catalysis depends on Glu202, which acts as the Proton donor. A Zn(2+)-binding site is contributed by Asp279.

Belongs to the metallo-dependent hydrolases superfamily. Adenosine and AMP deaminases family. Adenosine deaminase subfamily. Requires Zn(2+) as cofactor.

It carries out the reaction adenosine + H2O + H(+) = inosine + NH4(+). It catalyses the reaction 2'-deoxyadenosine + H2O + H(+) = 2'-deoxyinosine + NH4(+). Catalyzes the hydrolytic deamination of adenosine and 2-deoxyadenosine. This is Adenosine deaminase from Lacticaseibacillus paracasei (strain ATCC 334 / BCRC 17002 / CCUG 31169 / CIP 107868 / KCTC 3260 / NRRL B-441) (Lactobacillus paracasei).